The following is a 373-amino-acid chain: uncharacterized protein (373 aa).

This is an uncharacterized protein from Klebsiella pneumoniae.